A 178-amino-acid polypeptide reads, in one-letter code: Large ribosomal subunit protein bL25 (178 aa).

This sequence belongs to the bacterial ribosomal protein bL25 family. CTC subfamily. As to quaternary structure, part of the 50S ribosomal subunit; part of the 5S rRNA/L5/L18/L25 subcomplex. Contacts the 5S rRNA. Binds to the 5S rRNA independently of L5 and L18.

Its function is as follows. This is one of the proteins that binds to the 5S RNA in the ribosome where it forms part of the central protuberance. This chain is Large ribosomal subunit protein bL25, found in Helicobacter pylori (strain HPAG1).